The sequence spans 280 residues: Nucleotide-binding protein Dgeo_0723 (280 aa).

Residue 8–15 participates in ATP binding; it reads GLSGSGKS. 57 to 60 is a GTP binding site; it reads DART.

It belongs to the RapZ-like family.

Displays ATPase and GTPase activities. This Deinococcus geothermalis (strain DSM 11300 / CIP 105573 / AG-3a) protein is Nucleotide-binding protein Dgeo_0723.